The following is a 153-amino-acid chain: SsrA-binding protein (153 aa).

Belongs to the SmpB family.

It localises to the cytoplasm. In terms of biological role, required for rescue of stalled ribosomes mediated by trans-translation. Binds to transfer-messenger RNA (tmRNA), required for stable association of tmRNA with ribosomes. tmRNA and SmpB together mimic tRNA shape, replacing the anticodon stem-loop with SmpB. tmRNA is encoded by the ssrA gene; the 2 termini fold to resemble tRNA(Ala) and it encodes a 'tag peptide', a short internal open reading frame. During trans-translation Ala-aminoacylated tmRNA acts like a tRNA, entering the A-site of stalled ribosomes, displacing the stalled mRNA. The ribosome then switches to translate the ORF on the tmRNA; the nascent peptide is terminated with the 'tag peptide' encoded by the tmRNA and targeted for degradation. The ribosome is freed to recommence translation, which seems to be the essential function of trans-translation. This Lactobacillus delbrueckii subsp. bulgaricus (strain ATCC 11842 / DSM 20081 / BCRC 10696 / JCM 1002 / NBRC 13953 / NCIMB 11778 / NCTC 12712 / WDCM 00102 / Lb 14) protein is SsrA-binding protein.